We begin with the raw amino-acid sequence, 89 residues long: Small ribosomal subunit protein uS15 (89 aa).

The protein belongs to the universal ribosomal protein uS15 family. In terms of assembly, part of the 30S ribosomal subunit. Forms a bridge to the 50S subunit in the 70S ribosome, contacting the 23S rRNA.

In terms of biological role, one of the primary rRNA binding proteins, it binds directly to 16S rRNA where it helps nucleate assembly of the platform of the 30S subunit by binding and bridging several RNA helices of the 16S rRNA. Its function is as follows. Forms an intersubunit bridge (bridge B4) with the 23S rRNA of the 50S subunit in the ribosome. This chain is Small ribosomal subunit protein uS15, found in Streptococcus pneumoniae (strain P1031).